Here is a 111-residue protein sequence, read N- to C-terminus: Ribulose bisphosphate carboxylase small subunit (111 aa).

Belongs to the RuBisCO small chain family. As to quaternary structure, heterohexadecamer of 8 large and 8 small subunits. The CcmM short form purifies from carboxysomes in complex with both RuBisCO subunits; a second complex with full-length CcmM and RuBisCO also includes carbonic anhydrase (CA, ccaA). RuBisCO-CcmM complexes are probably associated with the carboxysome shell. Isolated reduced and oxidized SSUL1 binds holo-RuBisCO (RbcL(8)-RbcS(8)) but not either subunit octamer alone; RuBisCO has a higher affinity for reduced SSUL1.

Its subcellular location is the carboxysome. RuBisCO catalyzes two reactions: the carboxylation of D-ribulose 1,5-bisphosphate, the primary event in carbon dioxide fixation, as well as the oxidative fragmentation of the pentose substrate in the photorespiration process. Both reactions occur simultaneously and in competition at the same active site. Its function is as follows. Beta-carboxysome assembly initiates when soluble RuBisCO aggregates is condensed into a liquid matrix in a pre-carboxysome by the RbcS-like domains of probably both CcmM58 and CcmM35. CcmN interacts with the N-terminus of CcmM58, and then recruits the CcmK2 major shell protein via CcmN's encapsulation peptide. Shell formation requires CcmK proteins and CcmO. CcmL caps the otherwise elongated carboxysome. Once fully encapsulated carboxysomes are formed, they migrate within the cell probably via interactions with the cytoskeleton. This chain is Ribulose bisphosphate carboxylase small subunit, found in Synechococcus elongatus (strain ATCC 33912 / PCC 7942 / FACHB-805) (Anacystis nidulans R2).